Reading from the N-terminus, the 395-residue chain is Protein PELOTA 2 (395 aa).

This sequence belongs to the eukaryotic release factor 1 family. Pelota subfamily. A divalent metal cation serves as cofactor.

It localises to the cytoplasm. The protein localises to the nucleus. Functionally, component of the Pelota-HBS1L complex, a complex that recognizes stalled ribosomes and triggers the No-Go Decay (NGD) pathway. In the Pelota-HBS1L complex, pelo recognizes ribosomes stalled at the 3' end of an mRNA and engages stalled ribosomes by destabilizing mRNA in the mRNA channel. Following ribosome-binding, the Pelota-HBS1L complex promotes the disassembly of stalled ribosomes, followed by degradation of damaged mRNAs as part of the NGD pathway. This Arabidopsis thaliana (Mouse-ear cress) protein is Protein PELOTA 2 (PEL2).